The sequence spans 308 residues: GMP synthase [glutamine-hydrolyzing] subunit B (308 aa).

The GMPS ATP-PPase domain maps to 1-185 (MDWGRFVEEK…LGLPEKIYNR (185 aa)). 28-34 (SGGVDSS) serves as a coordination point for ATP.

In terms of assembly, heterodimer composed of a glutamine amidotransferase subunit (A) and a GMP-binding subunit (B).

The catalysed reaction is XMP + L-glutamine + ATP + H2O = GMP + L-glutamate + AMP + diphosphate + 2 H(+). It participates in purine metabolism; GMP biosynthesis; GMP from XMP (L-Gln route): step 1/1. Functionally, catalyzes the synthesis of GMP from XMP. In Pyrococcus horikoshii (strain ATCC 700860 / DSM 12428 / JCM 9974 / NBRC 100139 / OT-3), this protein is GMP synthase [glutamine-hydrolyzing] subunit B (guaAB).